The following is a 520-amino-acid chain: GMP synthase [glutamine-hydrolyzing] (520 aa).

Positions 9–202 (SVLIVDFGSQ…IHNIAGIKGD (194 aa)) constitute a Glutamine amidotransferase type-1 domain. The Nucleophile role is filled by cysteine 86. Catalysis depends on residues histidine 176 and glutamate 178. Residues 203–395 (WSMSAYRQKA…LGLPDSFIGR (193 aa)) form the GMPS ATP-PPase domain. 230 to 236 (SGGVDSS) contacts ATP.

As to quaternary structure, homodimer.

It catalyses the reaction XMP + L-glutamine + ATP + H2O = GMP + L-glutamate + AMP + diphosphate + 2 H(+). It participates in purine metabolism; GMP biosynthesis; GMP from XMP (L-Gln route): step 1/1. Its function is as follows. Catalyzes the synthesis of GMP from XMP. In Rhizobium etli (strain CIAT 652), this protein is GMP synthase [glutamine-hydrolyzing].